A 468-amino-acid polypeptide reads, in one-letter code: Neuronal acetylcholine receptor subunit alpha-5 (468 aa).

A signal peptide spans 1–22 (MATRGSGPRAPRLLLLVQLVAG). The Extracellular segment spans residues 23-254 (RCGLAGAAGG…VIKRLPLFYT (232 aa)). N-linked (GlcNAc...) asparagine glycans are attached at residues Asn155, Asn183, and Asn229. Cys170 and Cys184 are disulfide-bonded. Cysteines 234 and 235 form a disulfide. 3 helical membrane passes run 255–275 (LFLI…FYLP), 282–302 (ICLC…IEEI), and 317–337 (LVFT…AINI). Topologically, residues 338–429 (HHRSSSTHNA…WKFIAQVLDR (92 aa)) are cytoplasmic. A helical transmembrane segment spans residues 430–451 (MFLWTFLFVSIVGSLGLFVPVI). The Extracellular portion of the chain corresponds to 452–468 (YKWANILIPVHIGNANK).

It belongs to the ligand-gated ion channel (TC 1.A.9) family. Acetylcholine receptor (TC 1.A.9.1) subfamily. Alpha-5/CHRNA5 sub-subfamily. As to quaternary structure, neuronal AChR that forms heteropentamers composed of two different type of subunits: alpha and non-alpha (beta). CHRNA5/alpha-5 subunit is only able to form functional nAChRs when co-assembled with another alpha subunit, can be combined to CHRNA4/alpha-4 or CHRNA3/alpha-3 and CHRNB4/beta-4 or CHRNB2/beta-2 to give rise to functional receptors. Interacts with LYPD6.

It localises to the synaptic cell membrane. The protein localises to the cell membrane. It catalyses the reaction Ca(2+)(in) = Ca(2+)(out). The enzyme catalyses K(+)(in) = K(+)(out). It carries out the reaction Na(+)(in) = Na(+)(out). Its activity is regulated as follows. Activated by a myriad of ligands such as acetylcholine, cytisine, nicotine, choline and epibatidine. In terms of biological role, component of neuronal acetylcholine receptors (nAChRs) that function as pentameric, ligand-gated cation channels with high calcium permeability among other activities. nAChRs are excitatory neurotrasnmitter receptors formed by a collection of nAChR subunits known to mediate synaptic transmission in the nervous system and the neuromuscular junction. Each nAchR subunit confers differential attributes to channel properties, including activation, deactivation and desensitization kinetics, pH sensitivity, cation permeability, and binding to allosteric modulators. Has an accessory rather than functional role and is only able to form functional nAChRs when co-assembled with another beta subunit. Participates in pentameric assemblies along with CHRNA3, CHRNA4, CHRNB2 and CHRNB4. Increases receptor sensitivity to acetylcholine and nicotine when associated with CHRNA4 and CHRNB2. Plays a role in nicotine addiction. This is Neuronal acetylcholine receptor subunit alpha-5 (CHRNA5) from Pan troglodytes (Chimpanzee).